A 514-amino-acid polypeptide reads, in one-letter code: Monocarboxylate transporter 10 (514 aa).

The interval 1-64 is disordered; it reads MVPSQEEPAA…TGNQEPPEPP (64 aa). Over 1 to 65 the chain is Cytoplasmic; the sequence is MVPSQEEPAA…GNQEPPEPPE (65 aa). Residues 66–86 form a helical membrane-spanning segment; that stretch reads GGWGWLVMLAAMWCNGSVFGI. The Extracellular portion of the chain corresponds to 87–113; the sequence is QNAYGVLFVSMLETFGAKDDDNMAFKA. A helical membrane pass occupies residues 114–134; that stretch reads AWVGSLSMGMIFFCCPIVSVF. At 135 to 143 the chain is on the cytoplasmic side; sequence TDMFGCRRT. A helical membrane pass occupies residues 144 to 164; it reads AVLGAAVGFVGLMSSSFVSSI. Residues 165–170 are Extracellular-facing; the sequence is EPLYFT. A helical membrane pass occupies residues 171–191; the sequence is YGVVFACGCSFAYQPSLVILG. Residues 192-199 lie on the Cytoplasmic side of the membrane; that stretch reads HYFKKRLG. The helical transmembrane segment at 200-220 threads the bilayer; that stretch reads LVNGIVTAGSSVFTILLPLLL. Topologically, residues 221–227 are extracellular; that stretch reads GNLTSTV. A helical transmembrane segment spans residues 228 to 248; it reads GLCYTLRILCIFMFVLFLAGF. At 249-290 the chain is on the cytoplasmic side; the sequence is TYRPLVPSSKEKESEDSRSSFFSRRKLSPPKKIFNFALFKET. Ser262 carries the post-translational modification Phosphoserine. Residues 291 to 311 form a helical membrane-spanning segment; sequence AYAVWAAGIPLALFGYFVPYV. Residues 312–328 lie on the Extracellular side of the membrane; it reads HLMNHVKERFKDVNNKE. Residues 329-349 form a helical membrane-spanning segment; sequence VLFMCIGVTSGVGRLLFGRIA. Position 350 (Asp350) is a topological domain, cytoplasmic. A helical transmembrane segment spans residues 351–371; it reads YLPGVKKVYLQVLSFFFIGLT. The Extracellular segment spans residues 372 to 395; the sequence is SMMIPLCSVFGALIALCLIMGLFD. Residues 396-416 traverse the membrane as a helical segment; that stretch reads GCFISIMAPIAFELVGPQDAS. At 417 to 418 the chain is on the cytoplasmic side; sequence QA. Residues 419–439 traverse the membrane as a helical segment; that stretch reads IGFLLGFMSIPMTVGPPVAGL. Residues 440–450 lie on the Extracellular side of the membrane; that stretch reads LHDKLGSYDLA. The helical transmembrane segment at 451–471 threads the bilayer; sequence FYLAGIPPFIGGAVLCLIPWI. Residues 472-514 are Cytoplasmic-facing; it reads HSKKQREISKNTGGEKMEKMLANQSSLLSSSSGIFKKESDSII. Phosphoserine is present on residues Ser497, Ser500, Ser502, and Ser503.

The protein belongs to the major facilitator superfamily. Monocarboxylate porter (TC 2.A.1.13) family. In terms of processing, not N-glycosylated. As to expression, strongly expressed in intestine, placenta and liver. In small intestine is detected in the basolateral membrane (at protein level).

The protein resides in the cell membrane. It localises to the basolateral cell membrane. The enzyme catalyses L-tryptophan(in) = L-tryptophan(out). It carries out the reaction L-tyrosine(in) = L-tyrosine(out). The catalysed reaction is L-phenylalanine(in) = L-phenylalanine(out). It catalyses the reaction 3,3',5-triiodo-L-thyronine(out) = 3,3',5-triiodo-L-thyronine(in). The enzyme catalyses L-thyroxine(out) = L-thyroxine(in). Functionally, sodium- and proton-independent thyroid hormones and aromatic acids transporter. Mediates both uptake and efflux of 3,5,3'-triiodothyronine (T3) and 3,5,3',5'-tetraiodothyronine (T4) with high affinity, suggesting a role in the homeostasis of thyroid hormone levels. Responsible for low affinity bidirectional transport of the aromatic amino acids, such as phenylalanine, tyrosine, tryptophan and L-3,4-dihydroxyphenylalanine (L-dopa). Plays an important role in homeostasis of aromatic amino acids. The protein is Monocarboxylate transporter 10 (Slc16a10) of Rattus norvegicus (Rat).